Consider the following 546-residue polypeptide: (-)-5-epieremophilene synthase STPS2 (546 aa).

Mg(2+) is bound by residues D299, D303, D442, T446, and E450. The DDXXD motif signature appears at 299 to 303 (DDTYD).

Belongs to the terpene synthase family. Tpsa subfamily. Monomer. It depends on Mg(2+) as a cofactor. As to expression, highly expressed in leaves. Expressed at levels in flowers.

It catalyses the reaction (2E,6E)-farnesyl diphosphate = (-)-5-epi-eremophilene + diphosphate. It functions in the pathway secondary metabolite biosynthesis; terpenoid biosynthesis. Its function is as follows. Sesquiterpene synthase that catalyzes the conversion of farnesyl diphosphate to (-)-5-epi-eremophilene. This Salvia miltiorrhiza (Chinese sage) protein is (-)-5-epieremophilene synthase STPS2.